The primary structure comprises 125 residues: Cu-Zn superoxide dismutase-like protein OPG175 (125 aa).

Residues Cys52 and Cys102 are joined by a disulfide bond.

This sequence belongs to the Cu-Zn superoxide dismutase family.

It localises to the virion. Its subcellular location is the host cytoplasm. Its function is as follows. Superoxide dismutase-like protein with no enzymatic activity. In Vaccinia virus (strain Western Reserve) (VACV), this protein is Cu-Zn superoxide dismutase-like protein OPG175 (OPG175).